Consider the following 273-residue polypeptide: Small ribosomal subunit protein uS3 (273 aa).

The KH type-2 domain occupies 40-110 (IRNLFFVNYR…NLDLTINEIG (71 aa)). The segment covering 244-265 (QVLSANKLTGSDVETSSIQALT) has biased composition (polar residues). The segment at 244–273 (QVLSANKLTGSDVETSSIQALTKPNKEDKQ) is disordered.

Belongs to the universal ribosomal protein uS3 family. Part of the 30S ribosomal subunit. Forms a tight complex with proteins S10 and S14.

Binds the lower part of the 30S subunit head. Binds mRNA in the 70S ribosome, positioning it for translation. In Mycoplasma pneumoniae (strain ATCC 29342 / M129 / Subtype 1) (Mycoplasmoides pneumoniae), this protein is Small ribosomal subunit protein uS3.